The chain runs to 123 residues: Ig heavy chain V region HPCG14 (123 aa).

An Ig-like domain is found at 1 to 114; sequence EVKLVESGGG…GYDYWFDVWG (114 aa).

The polypeptide is Ig heavy chain V region HPCG14 (Mus musculus (Mouse)).